Here is a 702-residue protein sequence, read N- to C-terminus: Ferrioxamine B receptor (702 aa).

Residues 1–30 form the signal peptide; that stretch reads MPLEMFMFATTRMALLIGGAIGGATFPLFA. Residues 55–168 form the TBDR plug domain; that stretch reads PDIETPQSVS…PGGIVALTSR (114 aa). Residues 173–702 enclose the TBDR beta-barrel domain; the sequence is DAGGEVKLFA…SIVGSVSWAF (530 aa).

This sequence belongs to the TonB-dependent receptor family.

The protein localises to the cell outer membrane. Ferrioxamine binding and uptake, in association with the TonB protein. May play a role in intestinal colonization. The sequence is that of Ferrioxamine B receptor (foxA) from Salmonella typhimurium (strain SL1344).